Consider the following 255-residue polypeptide: Hydroxyacylglutathione hydrolase (255 aa).

Positions 56, 58, 60, 61, 114, 133, and 171 each coordinate Zn(2+).

This sequence belongs to the metallo-beta-lactamase superfamily. Glyoxalase II family. Monomer. The cofactor is Zn(2+).

The enzyme catalyses an S-(2-hydroxyacyl)glutathione + H2O = a 2-hydroxy carboxylate + glutathione + H(+). The protein operates within secondary metabolite metabolism; methylglyoxal degradation; (R)-lactate from methylglyoxal: step 2/2. Functionally, thiolesterase that catalyzes the hydrolysis of S-D-lactoyl-glutathione to form glutathione and D-lactic acid. The chain is Hydroxyacylglutathione hydrolase from Nitrobacter winogradskyi (strain ATCC 25391 / DSM 10237 / CIP 104748 / NCIMB 11846 / Nb-255).